Consider the following 101-residue polypeptide: Small ribosomal subunit protein uS14m (101 aa).

Belongs to the universal ribosomal protein uS14 family. Component of the mitochondrial ribosome small subunit (28S) which comprises a 12S rRNA and about 30 distinct proteins. Interacts with LIAT1.

Its subcellular location is the mitochondrion. The sequence is that of Small ribosomal subunit protein uS14m (mrps14) from Dictyostelium citrinum (Slime mold).